Reading from the N-terminus, the 74-residue chain is uncharacterized protein (74 aa).

A helical transmembrane segment spans residues 7 to 26 (IHLYVMASAMSSSPIFFFFQ).

It is found in the membrane. This is an uncharacterized protein from Homo sapiens (Human).